The sequence spans 212 residues: Thymidylate kinase (212 aa).

An ATP-binding site is contributed by 10–17 (GPDGSGKS).

This sequence belongs to the thymidylate kinase family.

The catalysed reaction is dTMP + ATP = dTDP + ADP. Phosphorylation of dTMP to form dTDP in both de novo and salvage pathways of dTTP synthesis. The chain is Thymidylate kinase from Exiguobacterium sp. (strain ATCC BAA-1283 / AT1b).